The chain runs to 217 residues: Thymidylate kinase (217 aa).

Position 7-14 (7-14 (GIDGAGKS)) interacts with ATP.

It belongs to the thymidylate kinase family.

The catalysed reaction is dTMP + ATP = dTDP + ADP. Functionally, phosphorylation of dTMP to form dTDP in both de novo and salvage pathways of dTTP synthesis. In Pelodictyon phaeoclathratiforme (strain DSM 5477 / BU-1), this protein is Thymidylate kinase.